Reading from the N-terminus, the 265-residue chain is Shikimate dehydrogenase (NADP(+)) (265 aa).

Shikimate-binding positions include 15–17 (SLS) and T62. K66 acts as the Proton acceptor in catalysis. Shikimate is bound by residues N87 and D102. NADP(+) contacts are provided by residues 125 to 129 (GAGGA), 149 to 154 (NRTLEK), and L209. Y211 provides a ligand contact to shikimate. G233 is a binding site for NADP(+).

This sequence belongs to the shikimate dehydrogenase family. As to quaternary structure, homodimer.

It carries out the reaction shikimate + NADP(+) = 3-dehydroshikimate + NADPH + H(+). The protein operates within metabolic intermediate biosynthesis; chorismate biosynthesis; chorismate from D-erythrose 4-phosphate and phosphoenolpyruvate: step 4/7. Its function is as follows. Involved in the biosynthesis of the chorismate, which leads to the biosynthesis of aromatic amino acids. Catalyzes the reversible NADPH linked reduction of 3-dehydroshikimate (DHSA) to yield shikimate (SA). This Legionella pneumophila subsp. pneumophila (strain Philadelphia 1 / ATCC 33152 / DSM 7513) protein is Shikimate dehydrogenase (NADP(+)).